The following is a 520-amino-acid chain: Pleckstrin homology domain-containing family A member 8 (520 aa).

The PH domain maps to 1–93 (MEGVLYKWTN…WLVALGSAKA (93 aa)). Thr139 bears the Phosphothreonine mark. Position 145 is a phosphoserine (Ser145). Phosphothreonine is present on Thr153. The span at 275–285 (GEESLGNHDSD) shows a compositional bias: basic and acidic residues. The disordered stretch occupies residues 275 to 305 (GEESLGNHDSDLAQPELHSTSSSPESHWEED). The tract at residues 311–520 (TFFSTMNTSF…VHGLESDEVV (210 aa)) is glycolipid transfer protein homology domain.

As to quaternary structure, homodimer. Interacts with ARF1; the interaction together with phosphatidylinositol 4-phosphate binding is required for FAPP2 GlcCer transfer ability.

Its subcellular location is the cytoplasm. It localises to the golgi apparatus. The protein localises to the trans-Golgi network membrane. It is found in the membrane. Its function is as follows. Cargo transport protein that is required for apical transport from the trans-Golgi network (TGN). Transports AQP2 from the trans-Golgi network (TGN) to sites of AQP2 phosphorylation. Mediates the non-vesicular transport of glucosylceramide (GlcCer) from the trans-Golgi network (TGN) to the plasma membrane and plays a pivotal role in the synthesis of complex glycosphingolipids. Binding of both phosphatidylinositol 4-phosphate (PIP) and ARF1 are essential for the GlcCer transfer ability. Also required for primary cilium formation, possibly by being involved in the transport of raft lipids to the apical membrane, and for membrane tubulation. The sequence is that of Pleckstrin homology domain-containing family A member 8 (PLEKHA8) from Bos taurus (Bovine).